The following is a 499-amino-acid chain: MEFSTQTTASLHQIKTAALAVGVFADGVLSAAAEVIDRASHGAVAAVVKSEFRGRTGSTLVLRSLAGVSAQRVVLVGLGKQAEYNARAHASAEQAFAAACVAAQVGEGVSTLAGVAIEGVPVRARARSAAIAAGAAAYHYDATFGKANRDARPRLKKIVQVVDRAASAQAQLGLREGAAIAHGMELTRTLGNLPGNVCTPAYLGNTAKKLAREFKSLKVEVLERKQVEALGMGSFLSVARGSEEPLRFIVLRHAGKPAKKDKAGPVVLVGKGITFDAGGISLKPAATMDEMKYDMCGAASVLGTFRALAELELPLDVVGLIAACENLPSGKANKPGDVVTSMSGQTIEILNTDAEGRLVLCDALTYAERFKPAAVIDIATLTGACVVALGNVNSGLFSKDDALADALLAASRQSLDPAWRLPLDDAYQDQLKSNFADIANIGGPPAGAVTAACFLSRFTKAYPWAHLDIAGTAWRGGKDKGATGRPVPLLMQYLLDQAG.

Mn(2+) is bound by residues Lys-271 and Asp-276. Lys-283 is an active-site residue. The Mn(2+) site is built by Asp-294, Asp-353, and Glu-355. Arg-357 is a catalytic residue.

It belongs to the peptidase M17 family. It depends on Mn(2+) as a cofactor.

The protein localises to the cytoplasm. It carries out the reaction Release of an N-terminal amino acid, Xaa-|-Yaa-, in which Xaa is preferably Leu, but may be other amino acids including Pro although not Arg or Lys, and Yaa may be Pro. Amino acid amides and methyl esters are also readily hydrolyzed, but rates on arylamides are exceedingly low.. It catalyses the reaction Release of an N-terminal amino acid, preferentially leucine, but not glutamic or aspartic acids.. Functionally, presumably involved in the processing and regular turnover of intracellular proteins. Catalyzes the removal of unsubstituted N-terminal amino acids from various peptides. The polypeptide is Probable cytosol aminopeptidase (Bordetella bronchiseptica (strain ATCC BAA-588 / NCTC 13252 / RB50) (Alcaligenes bronchisepticus)).